A 56-amino-acid chain; its full sequence is Bacteriocin sublancin-168 (56 aa).

Residues 1–19 (MEKLFKEVKLEELENQKGS) constitute a propeptide that is removed on maturation. Intrachain disulfides connect Cys-26/Cys-55 and Cys-33/Cys-48. S-linked (Glc) cysteine; by host glycosylation is present at Cys-41.

As to quaternary structure, monomer. Post-translationally, production of active sublancin-168 requires at least one thiol-disulfide oxidoreductase (BdbB or, in its absence, BdbC). Membrane translocation and cleavage of the precursor are probably performed by SunT.

The protein localises to the secreted. Functionally, bacteriocin active against Gram-positive bacteria. Inhibits B.cereus spore outgrowth, after the germination stage, approximately 1000-fold better than it inhibits exponential growth of the same cells. Inhibits B.subtilis strain ATCC 6633. The polypeptide is Bacteriocin sublancin-168 (sunA) (Bacillus pumilus (Bacillus mesentericus)).